The primary structure comprises 617 residues: Proline--tRNA ligase (617 aa).

Belongs to the class-II aminoacyl-tRNA synthetase family. ProS type 1 subfamily. In terms of assembly, homodimer.

Its subcellular location is the cytoplasm. The catalysed reaction is tRNA(Pro) + L-proline + ATP = L-prolyl-tRNA(Pro) + AMP + diphosphate. Catalyzes the attachment of proline to tRNA(Pro) in a two-step reaction: proline is first activated by ATP to form Pro-AMP and then transferred to the acceptor end of tRNA(Pro). As ProRS can inadvertently accommodate and process non-cognate amino acids such as alanine and cysteine, to avoid such errors it has two additional distinct editing activities against alanine. One activity is designated as 'pretransfer' editing and involves the tRNA(Pro)-independent hydrolysis of activated Ala-AMP. The other activity is designated 'posttransfer' editing and involves deacylation of mischarged Ala-tRNA(Pro). The misacylated Cys-tRNA(Pro) is not edited by ProRS. This chain is Proline--tRNA ligase, found in Streptococcus pneumoniae (strain P1031).